Here is a 384-residue protein sequence, read N- to C-terminus: Probable zinc-binding alcohol dehydrogenase Rv1895 (384 aa).

Residues Cys-38, His-59, Cys-89, Cys-92, Cys-95, and Cys-103 each coordinate Zn(2+).

The protein belongs to the zinc-containing alcohol dehydrogenase family. Requires Zn(2+) as cofactor.

It catalyses the reaction a primary alcohol + NAD(+) = an aldehyde + NADH + H(+). The catalysed reaction is a secondary alcohol + NAD(+) = a ketone + NADH + H(+). This chain is Probable zinc-binding alcohol dehydrogenase Rv1895, found in Mycobacterium tuberculosis (strain ATCC 25618 / H37Rv).